A 550-amino-acid chain; its full sequence is Chaperonin GroEL 2 (550 aa).

Residues 30–33, Lys-51, 87–91, Gly-415, 480–482, and Asp-496 each bind ATP; these read TLGP, DGTTT, and NAA.

It belongs to the chaperonin (HSP60) family. Forms a cylinder of 14 subunits composed of two heptameric rings stacked back-to-back. Interacts with the co-chaperonin GroES.

It is found in the cytoplasm. The catalysed reaction is ATP + H2O + a folded polypeptide = ADP + phosphate + an unfolded polypeptide.. Its function is as follows. Together with its co-chaperonin GroES, plays an essential role in assisting protein folding. The GroEL-GroES system forms a nano-cage that allows encapsulation of the non-native substrate proteins and provides a physical environment optimized to promote and accelerate protein folding. This is Chaperonin GroEL 2 from Erythrobacter litoralis (strain HTCC2594).